The chain runs to 491 residues: (R)-citramalate synthase CimA (491 aa).

The Pyruvate carboxyltransferase domain occupies 3–254 (VRIFDTTLRD…DTKIKMEKLY (252 aa)).

Belongs to the alpha-IPM synthase/homocitrate synthase family. Homodimer.

The catalysed reaction is pyruvate + acetyl-CoA + H2O = (3R)-citramalate + CoA + H(+). It participates in amino-acid biosynthesis; L-isoleucine biosynthesis; 2-oxobutanoate from pyruvate: step 1/3. Functionally, catalyzes the condensation of pyruvate and acetyl-coenzyme A to form (R)-citramalate. The polypeptide is (R)-citramalate synthase CimA (cimA) (Methanocaldococcus jannaschii (strain ATCC 43067 / DSM 2661 / JAL-1 / JCM 10045 / NBRC 100440) (Methanococcus jannaschii)).